A 261-amino-acid chain; its full sequence is SURF1-like protein (261 aa).

Helical transmembrane passes span 17–37 and 223–243; these read LYWALLSVPVVTFGLGTWQIF and LSYIITWYSISAITLAMWVFL.

Belongs to the SURF1 family.

The protein localises to the mitochondrion inner membrane. Functionally, probably involved in the biogenesis of the COX complex. The chain is SURF1-like protein from Monosiga brevicollis (Choanoflagellate).